Here is a 253-residue protein sequence, read N- to C-terminus: MVFFSCNNCGEACKKNQVERHLFQCRNTTFSCIDCQLVYTRETYKDHVKCITENQKYGGKNYVEKENKGEAKQNAWVDQVNRAIEFVTDSQVKELLKSVAGFANIPRKEAKFINFLTNSCRLRDKNLALRAWQAIAAEADKMREEAIRKQEETQKMEKAQKEAAAAAKKETTVATTAAEVTDAPESTFKWKKVIKRKLKENGGEMKIKKLKKAIIEELSAAGAASDDVDSIFDEKLQKCAAVTVDGKKVSLVV.

2 consecutive C2HC LYAR-type zinc fingers follow at residues 1-26 (MVFF…FQCR) and 27-51 (NTTF…VKCI). Zn(2+) is bound by residues C6, C9, H21, C25, C32, C35, H47, and C50. Residues 136-171 (AAEADKMREEAIRKQEETQKMEKAQKEAAAAAKKET) are a coiled coil.

It localises to the nucleus. This is an uncharacterized protein from Caenorhabditis elegans.